The sequence spans 559 residues: Thermosome subunit alpha (559 aa).

Residues Ser536–Ser552 show a composition bias toward basic and acidic residues. Residues Ser536–Glu559 are disordered.

It belongs to the TCP-1 chaperonin family. Forms a Heterooligomeric complex of two stacked nine-membered rings; one of alpha and the other of beta subunits.

Functionally, molecular chaperone; binds unfolded polypeptides in vitro, and has a weak ATPase activity. In Sulfurisphaera tokodaii (strain DSM 16993 / JCM 10545 / NBRC 100140 / 7) (Sulfolobus tokodaii), this protein is Thermosome subunit alpha (thsA).